Here is a 325-residue protein sequence, read N- to C-terminus: Natural cytotoxicity triggering receptor 1 (325 aa).

The signal sequence occupies residues 1-16 (MLPTLTALLCLGLCLS). The Extracellular segment spans residues 17 to 255 (QRINTEKETL…SAFWDHTTQN (239 aa)). Ig-like domains are found at residues 34-118 (KPSI…LVVT) and 129-211 (YPRP…LLIT). A disulfide bridge links Cys49 with Cys98. Asn139 carries an N-linked (GlcNAc...) asparagine glycan. The cysteines at positions 144 and 190 are disulfide-linked. 2 N-linked (GlcNAc...) asparagine glycosylation sites follow: Asn216 and Asn238. Residues 256-273 (LIRIGLACIILITLVWLL) traverse the membrane as a helical segment. Residues 274-325 (TEDWLSKRKDHEEANRLTNWECRRRWRMQHYFEEEQRNAISMMELKATPGAL) lie on the Cytoplasmic side of the membrane.

The protein belongs to the natural cytotoxicity receptor (NCR) family. Interacts with CD3Z and FCER1G. In terms of tissue distribution, selectively expressed by NK cells.

It localises to the cell membrane. Its function is as follows. Cytotoxicity-activating receptor that may contribute to the increased efficiency of activated natural killer (NK) cells to mediate tumor cell lysis. In Mus musculus (Mouse), this protein is Natural cytotoxicity triggering receptor 1 (Ncr1).